An 89-amino-acid polypeptide reads, in one-letter code: Elongation factor 1-beta (89 aa).

Belongs to the EF-1-beta/EF-1-delta family.

Functionally, promotes the exchange of GDP for GTP in EF-1-alpha/GDP, thus allowing the regeneration of EF-1-alpha/GTP that could then be used to form the ternary complex EF-1-alpha/GTP/AAtRNA. The protein is Elongation factor 1-beta of Methanobrevibacter smithii (strain ATCC 35061 / DSM 861 / OCM 144 / PS).